The following is a 170-amino-acid chain: MLSYYAFIFFAKIMEVALMTIRTVLITRGEKLYGSIIGFIEVTIWLYVTSSVLSGIKDDPIRMVVYALGFTCGNYMGCVIEEKLAIGLLTINVITSESDGKRLAEILRDENVGVTMVDAEGKIEQKKMLIIHAKRKRREEIIRTIEGSDINAMISVNDIKTVYGGYGIRK.

Helical transmembrane passes span 1–21 and 36–56; these read MLSY…LMTI and IIGF…LSGI.

It belongs to the UPF0316 family.

Its subcellular location is the cell membrane. This Clostridium botulinum (strain Loch Maree / Type A3) protein is UPF0316 protein CLK_3798.